The sequence spans 212 residues: Pyridoxine/pyridoxamine 5'-phosphate oxidase (212 aa).

Substrate-binding positions include 8–11 (RRNY) and Lys-66. FMN contacts are provided by residues 61–66 (RIVLLK), 76–77 (FT), Arg-82, Lys-83, and Gln-105. Substrate is bound by residues Tyr-123, Arg-127, and Ser-131. FMN-binding positions include 140–141 (QS) and Trp-184. Substrate is bound at residue 190 to 192 (RLH). Arg-194 lines the FMN pocket.

The protein belongs to the pyridoxamine 5'-phosphate oxidase family. As to quaternary structure, homodimer. The cofactor is FMN.

It carries out the reaction pyridoxamine 5'-phosphate + O2 + H2O = pyridoxal 5'-phosphate + H2O2 + NH4(+). The catalysed reaction is pyridoxine 5'-phosphate + O2 = pyridoxal 5'-phosphate + H2O2. It participates in cofactor metabolism; pyridoxal 5'-phosphate salvage; pyridoxal 5'-phosphate from pyridoxamine 5'-phosphate: step 1/1. The protein operates within cofactor metabolism; pyridoxal 5'-phosphate salvage; pyridoxal 5'-phosphate from pyridoxine 5'-phosphate: step 1/1. Catalyzes the oxidation of either pyridoxine 5'-phosphate (PNP) or pyridoxamine 5'-phosphate (PMP) into pyridoxal 5'-phosphate (PLP). In Cupriavidus metallidurans (strain ATCC 43123 / DSM 2839 / NBRC 102507 / CH34) (Ralstonia metallidurans), this protein is Pyridoxine/pyridoxamine 5'-phosphate oxidase.